The sequence spans 263 residues: Endonuclease 8 (263 aa).

Residue Pro2 is the Schiff-base intermediate with DNA of the active site. Glu3 (proton donor) is an active-site residue. Catalysis depends on Lys53, which acts as the Proton donor; for beta-elimination activity. DNA-binding residues include Gln70, Arg125, and Asn169. An FPG-type zinc finger spans residues 229-263 (KVFHRDGELCERCGGIIEKTTLSSRPFYWCPGCQH). Arg253 serves as the catalytic Proton donor; for delta-elimination activity.

It belongs to the FPG family. Requires Zn(2+) as cofactor.

The catalysed reaction is 2'-deoxyribonucleotide-(2'-deoxyribose 5'-phosphate)-2'-deoxyribonucleotide-DNA = a 3'-end 2'-deoxyribonucleotide-(2,3-dehydro-2,3-deoxyribose 5'-phosphate)-DNA + a 5'-end 5'-phospho-2'-deoxyribonucleoside-DNA + H(+). Involved in base excision repair of DNA damaged by oxidation or by mutagenic agents. Acts as a DNA glycosylase that recognizes and removes damaged bases. Has a preference for oxidized pyrimidines, such as thymine glycol, 5,6-dihydrouracil and 5,6-dihydrothymine. Has AP (apurinic/apyrimidinic) lyase activity and introduces nicks in the DNA strand. Cleaves the DNA backbone by beta-delta elimination to generate a single-strand break at the site of the removed base with both 3'- and 5'-phosphates. The sequence is that of Endonuclease 8 from Escherichia coli (strain 55989 / EAEC).